The primary structure comprises 320 residues: MKVNQDTHNAQPKLIDSNESVGDRLNILVVSGRSGSGKTSVLNILEDLGFYSIDNLPLSLVPEAVQKLVCDSGIKRIALGVDIRTPRADLSNFAAIHDSLKQAYGEEAVTVMYVTAQEETLVARFNATRRIHPLMVLDTKGVENTAYNLPAAIEKEIQLLQPICKYADIKIDTSMLNIHQLKERLRDYVGVDNQIVINLLSFGFKYGSPIDADFVFDVRILPNPHWNPTLRAATGLDAEVGEFFADYPEVTEMTGDIATFLNRWLPDFLHNNRHTVTVAIGCTGGKHRSVFITKHLQDSLQNSLPEGLTVTAKHREKHRW.

An ATP-binding site is contributed by 32 to 39 (GRSGSGKT). 82-85 (DIRT) contacts GTP.

This sequence belongs to the RapZ-like family.

Its function is as follows. Displays ATPase and GTPase activities. The sequence is that of Nucleotide-binding protein Psyc_0118 from Psychrobacter arcticus (strain DSM 17307 / VKM B-2377 / 273-4).